Here is a 158-residue protein sequence, read N- to C-terminus: MKALYPGSFDPLTFGHLDLIQRGSDLFGEVLIAVLENPSKKATFSCKRRIEQIENATKDIPGCRTIAFKGLTVDCARENNADLILRGLRAMSDFEYELQVAHTNRSLNNQYETIFLATETHHSFLSSSVVKEVARFGGEIRHMVPEFIAKDLMKLNTN.

Ser8 contributes to the substrate binding site. ATP is bound by residues 8-9 (SF) and His16. Positions 40, 72, and 86 each coordinate substrate. Residues 87–89 (GLR), Glu97, and 122–128 (HSFLSSS) contribute to the ATP site.

This sequence belongs to the bacterial CoaD family. In terms of assembly, homohexamer. It depends on Mg(2+) as a cofactor.

It is found in the cytoplasm. It catalyses the reaction (R)-4'-phosphopantetheine + ATP + H(+) = 3'-dephospho-CoA + diphosphate. It participates in cofactor biosynthesis; coenzyme A biosynthesis; CoA from (R)-pantothenate: step 4/5. Functionally, reversibly transfers an adenylyl group from ATP to 4'-phosphopantetheine, yielding dephospho-CoA (dPCoA) and pyrophosphate. The sequence is that of Phosphopantetheine adenylyltransferase from Prochlorococcus marinus (strain NATL1A).